We begin with the raw amino-acid sequence, 127 residues long: Major sperm protein 77/79 (127 aa).

An N-acetylalanine modification is found at alanine 2. An MSP domain is found at 9–126; that stretch reads DIQTQPGTKI…RRKNLPIEYN (118 aa).

In terms of tissue distribution, sperm.

The protein localises to the cell projection. It is found in the pseudopodium. It localises to the cytoplasm. Its subcellular location is the cytoskeleton. Functionally, central component in molecular interactions underlying sperm crawling. Forms an extensive filament system that extends from sperm villipoda, along the leading edge of the pseudopod. The protein is Major sperm protein 77/79 (msp-77) of Caenorhabditis elegans.